Here is a 367-residue protein sequence, read N- to C-terminus: GMP synthase [glutamine-hydrolyzing] subunit B (367 aa).

In terms of domain architecture, GMPS ATP-PPase spans 2–190 (FDPASFVEEI…LKLPKEISER (189 aa)). Residue 29 to 35 (SGGVDST) participates in ATP binding.

Heterodimer composed of a glutamine amidotransferase subunit (A) and a GMP-binding subunit (B).

It carries out the reaction XMP + L-glutamine + ATP + H2O = GMP + L-glutamate + AMP + diphosphate + 2 H(+). It participates in purine metabolism; GMP biosynthesis; GMP from XMP (L-Gln route): step 1/1. Functionally, catalyzes the synthesis of GMP from XMP. The chain is GMP synthase [glutamine-hydrolyzing] subunit B (guaAB) from Saccharolobus solfataricus (strain ATCC 35092 / DSM 1617 / JCM 11322 / P2) (Sulfolobus solfataricus).